A 206-amino-acid chain; its full sequence is Small ribosomal subunit protein uS4 (206 aa).

In terms of domain architecture, S4 RNA-binding spans 96–156 (TRLDNVVYRM…EKSRTQARIK (61 aa)).

This sequence belongs to the universal ribosomal protein uS4 family. As to quaternary structure, part of the 30S ribosomal subunit. Contacts protein S5. The interaction surface between S4 and S5 is involved in control of translational fidelity.

In terms of biological role, one of the primary rRNA binding proteins, it binds directly to 16S rRNA where it nucleates assembly of the body of the 30S subunit. Functionally, with S5 and S12 plays an important role in translational accuracy. This is Small ribosomal subunit protein uS4 from Shewanella baltica (strain OS223).